The primary structure comprises 196 residues: Peptidyl-tRNA hydrolase (196 aa).

Tyr17 contributes to the tRNA binding site. The active-site Proton acceptor is the His22. Residues Phe68, Asn70, and Asn116 each contribute to the tRNA site.

Belongs to the PTH family. In terms of assembly, monomer.

The protein localises to the cytoplasm. It catalyses the reaction an N-acyl-L-alpha-aminoacyl-tRNA + H2O = an N-acyl-L-amino acid + a tRNA + H(+). Hydrolyzes ribosome-free peptidyl-tRNAs (with 1 or more amino acids incorporated), which drop off the ribosome during protein synthesis, or as a result of ribosome stalling. Functionally, catalyzes the release of premature peptidyl moieties from peptidyl-tRNA molecules trapped in stalled 50S ribosomal subunits, and thus maintains levels of free tRNAs and 50S ribosomes. The protein is Peptidyl-tRNA hydrolase of Yersinia pseudotuberculosis serotype O:1b (strain IP 31758).